The following is a 111-amino-acid chain: Cytochrome c6 (111 aa).

The first 25 residues, 1-25 (MKRLLSLIFLVFVFFAVMLTPPALA), serve as a signal peptide directing secretion. Residues Cys39, Cys42, His43, and Met83 each coordinate heme c.

It belongs to the cytochrome c family. PetJ subfamily. As to quaternary structure, monomer. Binds 1 heme c group covalently per subunit.

It is found in the cellular thylakoid lumen. Functions as an electron carrier between membrane-bound cytochrome b6-f and photosystem I in oxygenic photosynthesis. The chain is Cytochrome c6 from Rippkaea orientalis (strain PCC 8801 / RF-1) (Cyanothece sp. (strain PCC 8801)).